A 267-amino-acid chain; its full sequence is MTKVNIGIVGCLGKQGKRLVAEISASPNAQVSAGLVRPGNPYVGQVLGEIVGCNCSAKAIDSLEHLFDVSDIVVEFTNPQTLLECIKMAESKKKPLLSGTTGPAATEMVFEDYIKNIPFLWTTNVSFGVNILAKLVEEAARKLFDYDIEVWEMHHRYKKDSPSGTSLILGRAAAKGRNVPFKKAQYVSGTPQEARQDVNTIGYAVSRGGSDLSDHRIMFVSDEEMIDFNHRTLNKNLYAKGALKAALWLVKQPPGVYTMSDMMAAAE.

10–15 (GCLGKQ) is an NAD(+) binding site. Arg-37 contributes to the NADP(+) binding site. NAD(+) is bound by residues 99–101 (GTT) and 122–125 (TTNV). The active-site Proton donor/acceptor is the His-154. His-155 serves as a coordination point for (S)-2,3,4,5-tetrahydrodipicolinate. The active-site Proton donor is Lys-158. 164–165 (GT) serves as a coordination point for (S)-2,3,4,5-tetrahydrodipicolinate.

The protein belongs to the DapB family.

It localises to the cytoplasm. It carries out the reaction (S)-2,3,4,5-tetrahydrodipicolinate + NAD(+) + H2O = (2S,4S)-4-hydroxy-2,3,4,5-tetrahydrodipicolinate + NADH + H(+). The enzyme catalyses (S)-2,3,4,5-tetrahydrodipicolinate + NADP(+) + H2O = (2S,4S)-4-hydroxy-2,3,4,5-tetrahydrodipicolinate + NADPH + H(+). Its pathway is amino-acid biosynthesis; L-lysine biosynthesis via DAP pathway; (S)-tetrahydrodipicolinate from L-aspartate: step 4/4. Its function is as follows. Catalyzes the conversion of 4-hydroxy-tetrahydrodipicolinate (HTPA) to tetrahydrodipicolinate. The chain is 4-hydroxy-tetrahydrodipicolinate reductase from Ehrlichia canis (strain Jake).